A 149-amino-acid chain; its full sequence is Large ribosomal subunit protein bL9 (149 aa).

Belongs to the bacterial ribosomal protein bL9 family.

Binds to the 23S rRNA. This chain is Large ribosomal subunit protein bL9, found in Chromobacterium violaceum (strain ATCC 12472 / DSM 30191 / JCM 1249 / CCUG 213 / NBRC 12614 / NCIMB 9131 / NCTC 9757 / MK).